The sequence spans 30 residues: Babycurus-toxin 1 (30 aa).

The region spanning 2 to 30 (KDGYPTNSKGCKISGCLPGENKFCLNECQ) is the LCN-type CS-alpha/beta domain.

The protein belongs to the long (4 C-C) scorpion toxin superfamily. Sodium channel inhibitor family. As to expression, expressed by the venom gland.

The protein localises to the secreted. Binds to sodium channels (Nav) and inhibits both the activation and inactivation of the activated channels, thereby blocking neuronal transmission. This chain is Babycurus-toxin 1, found in Babycurus centrurimorphus (East African scorpion).